The following is a 91-amino-acid chain: Small ribosomal subunit protein uS19 (91 aa).

The protein belongs to the universal ribosomal protein uS19 family.

Functionally, protein S19 forms a complex with S13 that binds strongly to the 16S ribosomal RNA. In Cupriavidus taiwanensis (strain DSM 17343 / BCRC 17206 / CCUG 44338 / CIP 107171 / LMG 19424 / R1) (Ralstonia taiwanensis (strain LMG 19424)), this protein is Small ribosomal subunit protein uS19.